The primary structure comprises 202 residues: Ras-related protein Rab-2B (202 aa).

31 to 38 provides a ligand contact to GTP; it reads GDSAVGKS. Residues 53 to 61 carry the Effector region motif; that stretch reads SDFTIGVEF. GTP is bound by residues 79-83 and 137-140; these read DTAGQ and NKAD.

Belongs to the small GTPase superfamily. Rab family. This sequence lacks the C-terminal cysteine motifs subject to isoprenylation in other Rab proteins.

The chain is Ras-related protein Rab-2B (rab2B) from Dictyostelium discoideum (Social amoeba).